Reading from the N-terminus, the 199-residue chain is TATA-box-binding protein (199 aa).

A run of 2 repeats spans residues 10 to 86 and 101 to 177.

Belongs to the TBP family.

General factor that plays a role in the activation of archaeal genes transcribed by RNA polymerase. Binds specifically to the TATA box promoter element which lies close to the position of transcription initiation. In Pyrobaculum islandicum (strain DSM 4184 / JCM 9189 / GEO3), this protein is TATA-box-binding protein.